Here is a 459-residue protein sequence, read N- to C-terminus: tRNA-2-methylthio-N(6)-dimethylallyladenosine synthase (459 aa).

An MTTase N-terminal domain is found at 1–116; that stretch reads MRAHLITYGC…IGKALETNER (116 aa). Residues C10, C46, C79, C148, C152, and C155 each coordinate [4Fe-4S] cluster. The Radical SAM core domain occupies 134 to 367; the sequence is PQGKLQAHLT…IAKQKEWSAR (234 aa). The region spanning 370–433 is the TRAM domain; that stretch reads AAKVGTIQEV…PHMLYGRLIG (64 aa).

This sequence belongs to the methylthiotransferase family. MiaB subfamily. Monomer. The cofactor is [4Fe-4S] cluster.

The protein localises to the cytoplasm. It catalyses the reaction N(6)-dimethylallyladenosine(37) in tRNA + (sulfur carrier)-SH + AH2 + 2 S-adenosyl-L-methionine = 2-methylsulfanyl-N(6)-dimethylallyladenosine(37) in tRNA + (sulfur carrier)-H + 5'-deoxyadenosine + L-methionine + A + S-adenosyl-L-homocysteine + 2 H(+). Functionally, catalyzes the methylthiolation of N6-(dimethylallyl)adenosine (i(6)A), leading to the formation of 2-methylthio-N6-(dimethylallyl)adenosine (ms(2)i(6)A) at position 37 in tRNAs that read codons beginning with uridine. This chain is tRNA-2-methylthio-N(6)-dimethylallyladenosine synthase, found in Deinococcus geothermalis (strain DSM 11300 / CIP 105573 / AG-3a).